We begin with the raw amino-acid sequence, 865 residues long: Catenin alpha-2 (865 aa).

Residues 823 to 839 (PEKKPLVKREKPEECQT) show a composition bias toward basic and acidic residues. Residues 823–851 (PEKKPLVKREKPEECQTRVRRGSQKKHIS) are disordered. The segment covering 840–850 (RVRRGSQKKHI) has biased composition (basic residues).

The protein belongs to the vinculin/alpha-catenin family.

The protein localises to the cell membrane. The protein resides in the cytoplasm. Its subcellular location is the cytoskeleton. It is found in the cell junction. It localises to the adherens junction. The protein localises to the cell projection. The protein resides in the axon. Its subcellular location is the nucleus. Functionally, may function as a linker between cadherin adhesion receptors and the cytoskeleton to regulate cell-cell adhesion and differentiation in the nervous system. The sequence is that of Catenin alpha-2 (Ctnna2) from Danio rerio (Zebrafish).